A 102-amino-acid chain; its full sequence is MAERKIRIRLKAYEYRTIDASAAKIVETAKRTGAQVVGPIPLPTERTIYTILRSPHKHKDSREQFEMRTHKRLIDLVNPTDKTVDSLRKLDLPAGVAIEIKL.

The protein belongs to the universal ribosomal protein uS10 family. In terms of assembly, part of the 30S ribosomal subunit.

Functionally, involved in the binding of tRNA to the ribosomes. The protein is Small ribosomal subunit protein uS10 of Oenococcus oeni (strain ATCC BAA-331 / PSU-1).